Consider the following 75-residue polypeptide: Cytochrome c oxidase subunit 6C (75 aa).

Residues 1 to 13 (MAPEVLPKPRMRG) lie on the Mitochondrial matrix side of the membrane. A helical transmembrane segment spans residues 14 to 54 (LLARRLRNHMAVAFVLSLGVAALYKFRVADQRKKAYADFYR). Residues 55–75 (NYDVMKDFEEMRKAGIFQSVK) lie on the Mitochondrial intermembrane side of the membrane.

The protein belongs to the cytochrome c oxidase subunit 6c family. In terms of assembly, component of the cytochrome c oxidase (complex IV, CIV), a multisubunit enzyme composed of 14 subunits. The complex is composed of a catalytic core of 3 subunits MT-CO1, MT-CO2 and MT-CO3, encoded in the mitochondrial DNA, and 11 supernumerary subunits COX4I1 (or COX4I2), COX5A, COX5B, COX6A1 (or COX6A2), COX6B1 (or COX6B2), COX6C, COX7A2 (or COX7A1), COX7B, COX7C, COX8A and NDUFA4, which are encoded in the nuclear genome. The complex exists as a monomer or a dimer and forms supercomplexes (SCs) in the inner mitochondrial membrane with NADH-ubiquinone oxidoreductase (complex I, CI) and ubiquinol-cytochrome c oxidoreductase (cytochrome b-c1 complex, complex III, CIII), resulting in different assemblies (supercomplex SCI(1)III(2)IV(1) and megacomplex MCI(2)III(2)IV(2)).

It is found in the mitochondrion inner membrane. Its pathway is energy metabolism; oxidative phosphorylation. Functionally, component of the cytochrome c oxidase, the last enzyme in the mitochondrial electron transport chain which drives oxidative phosphorylation. The respiratory chain contains 3 multisubunit complexes succinate dehydrogenase (complex II, CII), ubiquinol-cytochrome c oxidoreductase (cytochrome b-c1 complex, complex III, CIII) and cytochrome c oxidase (complex IV, CIV), that cooperate to transfer electrons derived from NADH and succinate to molecular oxygen, creating an electrochemical gradient over the inner membrane that drives transmembrane transport and the ATP synthase. Cytochrome c oxidase is the component of the respiratory chain that catalyzes the reduction of oxygen to water. Electrons originating from reduced cytochrome c in the intermembrane space (IMS) are transferred via the dinuclear copper A center (CU(A)) of subunit 2 and heme A of subunit 1 to the active site in subunit 1, a binuclear center (BNC) formed by heme A3 and copper B (CU(B)). The BNC reduces molecular oxygen to 2 water molecules using 4 electrons from cytochrome c in the IMS and 4 protons from the mitochondrial matrix. This chain is Cytochrome c oxidase subunit 6C (COX6C), found in Homo sapiens (Human).